A 772-amino-acid chain; its full sequence is Protocadherin beta-6 (772 aa).

Positions 1–28 are cleaved as a signal peptide; it reads METTLAKTPEKRQVVFLAILLLLWEAGS. Cadherin domains lie at 31 to 133, 134 to 242, 243 to 346, 347 to 450, and 451 to 560; these read IRYS…SPEF, PDTE…APEF, VQSL…APKL, TISS…APAF, and TQTS…APFI. The Extracellular segment spans residues 31–690; it reads IRYSIPEETE…QDEDMLTLYL (660 aa). Residues cysteine 96 and cysteine 102 are joined by a disulfide bond. An N-linked (GlcNAc...) asparagine glycan is attached at asparagine 169. An O-linked (Man) serine glycan is attached at serine 223. An O-linked (Man) threonine glycan is attached at threonine 225. N-linked (GlcNAc...) asparagine glycosylation occurs at asparagine 417. N-linked (GlcNAc...) asparagine glycosylation occurs at asparagine 566. The Cadherin 6 domain occupies 575–675; the sequence is LPRAAEPGYL…SQPYLPLPEV (101 aa). Residues 691–711 form a helical membrane-spanning segment; the sequence is VIALASVSSLFLLSVLLFVGV. Residues 712-772 are Cytoplasmic-facing; sequence RLCRRVREAS…DFKFLNHYSQ (61 aa).

In terms of assembly, forms homodimers in trans (molecules expressed by two different cells). Forms promiscuous heterodimers in cis (at the plasma membrane of the same cell) with other protocadherins.

It localises to the cell membrane. Its function is as follows. Calcium-dependent cell-adhesion protein involved in cells self-recognition and non-self discrimination. Thereby, it is involved in the establishment and maintenance of specific neuronal connections in the brain. This is Protocadherin beta-6 from Mus musculus (Mouse).